The chain runs to 374 residues: Homoserine O-acetyltransferase (374 aa).

The region spanning 45–353 (NAILVLHALT…PYGHDAFLIE (309 aa)) is the AB hydrolase-1 domain. Residue S151 is the Nucleophile of the active site. R220 provides a ligand contact to substrate. Residues D314 and H347 contribute to the active site. D348 contributes to the substrate binding site.

The protein belongs to the AB hydrolase superfamily. MetX family. In terms of assembly, homodimer.

It is found in the cytoplasm. The catalysed reaction is L-homoserine + acetyl-CoA = O-acetyl-L-homoserine + CoA. Its pathway is amino-acid biosynthesis; L-methionine biosynthesis via de novo pathway; O-acetyl-L-homoserine from L-homoserine: step 1/1. Its function is as follows. Transfers an acetyl group from acetyl-CoA to L-homoserine, forming acetyl-L-homoserine. The sequence is that of Homoserine O-acetyltransferase from Moorella thermoacetica (strain ATCC 39073 / JCM 9320).